A 378-amino-acid chain; its full sequence is MRMLVSGRRVKKWQLIIQLFATCFLASLMFFWEPIDNHIVSHMKSYSYRYLINSYDFVNDTLSLKHTSAGPRYQYLINHKEKCQAQDVLLLLFVKTAPENYDRRSGIRRTWGNENYVRSQLNANIKTLFALGTPNPLEGEELQRKLAWEDQRYNDIIQQDFVDSFYNLTLKLLMQFSWANTYCPHAKFLMTADDDIFIHMPNLIEYLQSLEQIGVQDFWIGRVHRGAPPIRDKSSKYYVSYEMYQWPAYPDYTAGAAYVISGDVAAKVYEASQTLNSSLYIDDVFMGLCANKIGIVPQDHVFFSGEGKTPYHPCIYEKMMTSHGHLEDLQDLWKNATDPKVKTISKGFFGQIYCRLMKIILLCKISYVDTYPCRAAFI.

At 1 to 14 (MRMLVSGRRVKKWQ) the chain is on the cytoplasmic side. The chain crosses the membrane as a helical; Signal-anchor for type II membrane protein span at residues 15–35 (LIIQLFATCFLASLMFFWEPI). Residues 36 to 378 (DNHIVSHMKS…DTYPCRAAFI (343 aa)) are Lumenal-facing. A glycan (N-linked (GlcNAc...) asparagine) is linked at Asn-59.

It belongs to the glycosyltransferase 31 family. In terms of tissue distribution, widely expressed. Highly expressed in lung, colon, placenta, testis, pituitary gland and cerebellum. Weakly expressed in brain, liver, spleen, lymph node and thymus.

The protein resides in the golgi apparatus membrane. The catalysed reaction is a beta-D-Gal-(1-&gt;4)-beta-D-Glc-(1&lt;-&gt;1)-Cer(d18:1(4E)) + UDP-N-acetyl-alpha-D-glucosamine = a beta-D-GlcNAc-(1-&gt;3)-beta-D-Gal-(1-&gt;4)-beta-D-Glc-(1&lt;-&gt;1)-Cer(d18:1(4E)) + UDP + H(+). It catalyses the reaction a neolactoside nLc4Cer(d18:1(4E)) + UDP-N-acetyl-alpha-D-glucosamine = a neolactoside IV(3)-beta-GlcNAc-nLc4Cer(d18:1(4E)) + UDP + H(+). It functions in the pathway protein modification; protein glycosylation. In terms of biological role, beta-1,3-N-acetylglucosaminyltransferase that plays a key role in the synthesis of lacto- or neolacto-series carbohydrate chains on glycolipids, notably by participating in biosynthesis of HNK-1 and Lewis X carbohydrate structures. Has strong activity toward lactosylceramide (LacCer) and neolactotetraosylceramide (nLc(4)Cer; paragloboside), resulting in the synthesis of Lc(3)Cer and neolactopentaosylceramide (nLc(5)Cer), respectively. Probably plays a central role in regulating neolacto-series glycolipid synthesis during embryonic development. The sequence is that of Lactosylceramide 1,3-N-acetyl-beta-D-glucosaminyltransferase from Homo sapiens (Human).